Consider the following 714-residue polypeptide: Pre-mRNA-splicing factor CLF1 (714 aa).

HAT repeat units lie at residues 48–80 (SFQL…WEVK), 83–115 (HDFP…FELS), 117–149 (KNIT…TEET), 151–182 (KNYQ…YEKR), 184–215 (DEYD…FEMN), 265–305 (KEYE…FEKS), 315–347 (SIMI…ILQQ), 349–384 (DNNE…IWVK), 394–430 (GSIE…FEIR), 435–470 (NGLA…LEQK), 472–510 (GEWD…FEKN), and 555–586 (MRYA…FESS).

The protein belongs to the crooked-neck family. In terms of assembly, associated with the spliceosome.

The protein localises to the nucleus. Functionally, involved in pre-mRNA splicing and cell cycle progression. Required for the spliceosome assembly and initiation of the DNA replication. In Debaryomyces hansenii (strain ATCC 36239 / CBS 767 / BCRC 21394 / JCM 1990 / NBRC 0083 / IGC 2968) (Yeast), this protein is Pre-mRNA-splicing factor CLF1 (CLF1).